Consider the following 159-residue polypeptide: uncharacterized protein (159 aa).

Positions 44, 124, and 128 each coordinate a divalent metal cation.

Belongs to the DinB family.

This is an uncharacterized protein from Bacillus subtilis (strain 168).